A 564-amino-acid chain; its full sequence is Isopullulanase (564 aa).

Residues 1–19 form the signal peptide; the sequence is MRSTGYLLTLSAAFQVAQA. N-linked (GlcNAc...) asparagine glycosylation is found at asparagine 24, asparagine 94, asparagine 115, asparagine 138, asparagine 186, asparagine 210, asparagine 305, asparagine 381, asparagine 448, asparagine 455, asparagine 460, asparagine 486, asparagine 491, asparagine 503, and asparagine 535.

Post-translationally, N-glycosylated.

The protein resides in the secreted. The catalysed reaction is Hydrolysis of pullulan to isopanose (6-alpha-maltosylglucose).. Its function is as follows. Hydrolyzes pullulan, a linear polymer which is composed of maltotriose units with alpha-1,6 glucosidic linkages, to produce isopanose (Glca1-4Glca1-6Glc). This is Isopullulanase (ipuA) from Aspergillus niger.